The primary structure comprises 378 residues: ATP phosphoribosyltransferase regulatory subunit (378 aa).

Belongs to the class-II aminoacyl-tRNA synthetase family. HisZ subfamily. As to quaternary structure, heteromultimer composed of HisG and HisZ subunits.

It localises to the cytoplasm. The protein operates within amino-acid biosynthesis; L-histidine biosynthesis; L-histidine from 5-phospho-alpha-D-ribose 1-diphosphate: step 1/9. In terms of biological role, required for the first step of histidine biosynthesis. May allow the feedback regulation of ATP phosphoribosyltransferase activity by histidine. This Brucella abortus (strain 2308) protein is ATP phosphoribosyltransferase regulatory subunit.